Here is a 1043-residue protein sequence, read N- to C-terminus: MFKEVGEPNFPKLEEEVLAFWKREKIFQKSVENRKGGPRYTVYEGPPTANGLPHVGHAQARSYKDLFPRYKTMRGYYAPRRAGWDTHGLPVELEVEKKLGLKSKREIEAYGIERFNQACRESVFTYEKEWEAFTERIAYWVDLENAYATLEPTYIESIWWSLKNLFDRGLLYRDHKVVPYCPRCGTPLSSHEVALGYKEIQDPSVYVRFPLKEPKKLGLEKASLLIWTTTPWTLPGNVAAAVHPEYTYAAFQVGDEALILEEGLGRKLLGEGTPVLKTFPGKALEGLPYTPPYPQALEKGYFVVLADYVSQEDGTGIVHQAPAFGAEDLETARVYGLPLLKTVDEEGKLLVEPFKGLYFREANRAILRDLRGRGLLFKEESYLHSYPHCWRCSTPLMYYATESWFIKNTLFKDELIRKNQEIHWVPPHIKEGRYGEWLKNLVDWALSRNRYWGTPLPIWVCQACGKEEAIGSFQELKARATKPLPEPFDPHRPYVDQVELACACGGTMRRVPYVIDVWYDSGAMPFASLHYPFEHEEVFRESFPADFIAEGIDQTRGWFNSLHQLGVMLFGSIAFKNVICHGLILDEKGQKMSKSKGNVVDPWDIIREFGADALRWYIYVSAPPEADRRFGPNLVRETVRDYFLTLWNVYSFFVTYANLDRPDLKNPPPPEKRPEMDRWLLARMQDLIQRVTEALEAYDPTTSARALRDFVVEDLSQWYVRRNRRRFWKNEDALDREAAYATLYEALVLVATLAAPFTPFLAEVLWQNLVRSVRPEAKESVHLADWPEADPALADEALVAQMRAVLKVVDLARAARAKSGVKTRTPLPLLLVTAPTALEREGLKRFAHEIAEELNVKEVRVLEPGEEILSYRVLPNLKLLGRKYGKLVPKIREALQRERERAAALALKGEAIPLEVEGEALTLLPEEVLLEAEAPKGYQALEKDGYVAALKVEVTEALRMEGLARDLIRLLQQARKDMGLKVSDRIRVGYEAEGPYLEALKRHGPWIAEEVLATAFGEGLFGGFEARVEDEEGKAVFHLARAE.

L-isoleucyl-5'-AMP-binding residues include Pro46 and His57. The 'HIGH' region motif lies at 47-57 (PTANGLPHVGH). Residues Cys181 and Cys184 each coordinate Zn(2+). Residues His319 and Asp328 each coordinate L-valine. Positions 389, 392, 461, 464, 502, and 504 each coordinate Zn(2+). L-isoleucyl-5'-AMP-binding residues include Glu550, Gly551, Asp553, Gln554, and His581. Positions 591–595 (KMSKS) match the 'KMSKS' region motif. Lys594 serves as a coordination point for ATP.

This sequence belongs to the class-I aminoacyl-tRNA synthetase family. IleS type 2 subfamily. In terms of assembly, monomer. Zn(2+) serves as cofactor.

The protein localises to the cytoplasm. The enzyme catalyses tRNA(Ile) + L-isoleucine + ATP = L-isoleucyl-tRNA(Ile) + AMP + diphosphate. In terms of biological role, catalyzes the attachment of isoleucine to tRNA(Ile). As IleRS can inadvertently accommodate and process structurally similar amino acids such as valine, to avoid such errors it has two additional distinct tRNA(Ile)-dependent editing activities. One activity is designated as 'pretransfer' editing and involves the hydrolysis of activated Val-AMP. The other activity is designated 'posttransfer' editing and involves deacylation of mischarged Val-tRNA(Ile). The polypeptide is Isoleucine--tRNA ligase (ileS) (Thermus thermophilus (strain ATCC 27634 / DSM 579 / HB8)).